Consider the following 274-residue polypeptide: Aliphatic sulfonates import ATP-binding protein SsuB 2 (274 aa).

The 222-residue stretch at 21-242 folds into the ABC transporter domain; sequence LALRGVARRF…SRGSARLAAL (222 aa). 53 to 60 contacts ATP; sequence GRSGCGKS.

It belongs to the ABC transporter superfamily. Aliphatic sulfonates importer (TC 3.A.1.17.2) family. As to quaternary structure, the complex is composed of two ATP-binding proteins (SsuB), two transmembrane proteins (SsuC) and a solute-binding protein (SsuA).

It is found in the cell inner membrane. The enzyme catalyses ATP + H2O + aliphatic sulfonate-[sulfonate-binding protein]Side 1 = ADP + phosphate + aliphatic sulfonateSide 2 + [sulfonate-binding protein]Side 1.. Functionally, part of the ABC transporter complex SsuABC involved in aliphatic sulfonates import. Responsible for energy coupling to the transport system. This chain is Aliphatic sulfonates import ATP-binding protein SsuB 2, found in Pseudomonas aeruginosa (strain UCBPP-PA14).